A 329-amino-acid chain; its full sequence is Glycerol-3-phosphate dehydrogenase [NAD(P)+] (329 aa).

The NADPH site is built by S10, W11, R31, and K105. Residues K105, G134, and S136 each coordinate sn-glycerol 3-phosphate. NADPH is bound at residue A138. The sn-glycerol 3-phosphate site is built by K189, D242, S252, R253, and N254. K189 functions as the Proton acceptor in the catalytic mechanism. An NADPH-binding site is contributed by R253. Residues V277 and E279 each contribute to the NADPH site.

Belongs to the NAD-dependent glycerol-3-phosphate dehydrogenase family.

It is found in the cytoplasm. The catalysed reaction is sn-glycerol 3-phosphate + NAD(+) = dihydroxyacetone phosphate + NADH + H(+). It carries out the reaction sn-glycerol 3-phosphate + NADP(+) = dihydroxyacetone phosphate + NADPH + H(+). It participates in membrane lipid metabolism; glycerophospholipid metabolism. Catalyzes the reduction of the glycolytic intermediate dihydroxyacetone phosphate (DHAP) to sn-glycerol 3-phosphate (G3P), the key precursor for phospholipid synthesis. In Neisseria meningitidis serogroup C (strain 053442), this protein is Glycerol-3-phosphate dehydrogenase [NAD(P)+].